Here is a 366-residue protein sequence, read N- to C-terminus: MSFSFFRKAPKFWERRGPTSLLLWPLSWIYGLVLHARKLIQDTGFVKPKPAPVPIIIVGNIRVGGTGKTPIVIALAERLQQLGWNPGIISRGYGGKGSSAQTSPLQVKSNSDPTLVGDEPVLIARRTHDQFPIWVFPKRQQSIRELLKHSPNVNVIISDDGLQHSGLARWPAREGGRDIELVVRDERGEGNRFLLPAGPLREPATRERDATLFTGKIKSDDHQIGLQDEYFLGRRAFSLLSNLGKPYQLNNPANTQTLTQIADSYLPNKITTVAALGNPQRFFDDLLKNGIAGKTISLPDHATYTPEFFTKLNAQCILITEKDAVKCSAIMDECIWVVPMSLALSDNLAEWLQSILQRPDPYRYTL.

ATP is bound at residue 62 to 69 (RVGGTGKT).

Belongs to the LpxK family.

The enzyme catalyses a lipid A disaccharide + ATP = a lipid IVA + ADP + H(+). It functions in the pathway glycolipid biosynthesis; lipid IV(A) biosynthesis; lipid IV(A) from (3R)-3-hydroxytetradecanoyl-[acyl-carrier-protein] and UDP-N-acetyl-alpha-D-glucosamine: step 6/6. Functionally, transfers the gamma-phosphate of ATP to the 4'-position of a tetraacyldisaccharide 1-phosphate intermediate (termed DS-1-P) to form tetraacyldisaccharide 1,4'-bis-phosphate (lipid IVA). This is Tetraacyldisaccharide 4'-kinase from Polynucleobacter necessarius subsp. necessarius (strain STIR1).